The following is a 280-amino-acid chain: Golgi to ER traffic protein 2 (280 aa).

3 stretches are compositionally biased toward basic and acidic residues: residues 1–17, 44–62, and 71–80; these read MSLSEAEKRKILRERRQ, SALDEKPEVVEEIPREAVK, and AKKESTAQAK. The segment at 1-80 is disordered; sequence MSLSEAEKRK…AKKESTAQAK (80 aa). Residues 1–146 are Cytoplasmic-facing; it reads MSLSEAEKRK…VEYHKYRVNT (146 aa). The helical transmembrane segment at 147-166 threads the bilayer; sequence LTAKTTLVKWIVLLAYIFLL. The Lumenal segment spans residues 167–191; that stretch reads TRTDDTYFPFVVRSYLPEVFTSQSS. The chain crosses the membrane as a helical span at residues 192–211; it reads FFSIFLTFEILATSIYYQLS. Over 212–258 the chain is Cytoplasmic; sequence VGVERETGVKTLQDTSKIVSLVSMVPEGILPIADLRGKVILAMKYWN. The chain crosses the membrane as a helical span at residues 259–279; the sequence is IIAMMIGDVCFVLVAIGLVSQ. Position 280 (Ile-280) is a topological domain, lumenal.

The protein belongs to the GET2 family. Component of the Golgi to ER traffic (GET) complex, which is composed of GET1, GET2 and GET3. Within the complex, GET1 and GET2 form a heterotetramer which is stabilized by phosphatidylinositol binding and which binds to the GET3 homodimer.

The protein resides in the endoplasmic reticulum membrane. It is found in the golgi apparatus membrane. In terms of biological role, required for the post-translational delivery of tail-anchored (TA) proteins to the endoplasmic reticulum. Together with GET1, acts as a membrane receptor for soluble GET3, which recognizes and selectively binds the transmembrane domain of TA proteins in the cytosol. The GET complex cooperates with the HDEL receptor ERD2 to mediate the ATP-dependent retrieval of resident ER proteins that contain a C-terminal H-D-E-L retention signal from the Golgi to the ER. This Candida glabrata (strain ATCC 2001 / BCRC 20586 / JCM 3761 / NBRC 0622 / NRRL Y-65 / CBS 138) (Yeast) protein is Golgi to ER traffic protein 2.